The primary structure comprises 115 residues: uncharacterized protein (115 aa).

A run of 2 helical transmembrane segments spans residues 15–35 (FSTQ…EVLF) and 52–72 (FDGV…YYSI).

The protein localises to the membrane. This is an uncharacterized protein from Saccharomyces cerevisiae (strain ATCC 204508 / S288c) (Baker's yeast).